The sequence spans 348 residues: Aspartate carbamoyltransferase catalytic subunit (348 aa).

Carbamoyl phosphate-binding residues include Arg-59 and Thr-60. An L-aspartate-binding site is contributed by Lys-87. Positions 109, 142, and 145 each coordinate carbamoyl phosphate. Arg-182 and Arg-253 together coordinate L-aspartate. Gly-294 and Pro-295 together coordinate carbamoyl phosphate.

It belongs to the aspartate/ornithine carbamoyltransferase superfamily. ATCase family. Heterododecamer (2C3:3R2) of six catalytic PyrB chains organized as two trimers (C3), and six regulatory PyrI chains organized as three dimers (R2).

It carries out the reaction carbamoyl phosphate + L-aspartate = N-carbamoyl-L-aspartate + phosphate + H(+). It functions in the pathway pyrimidine metabolism; UMP biosynthesis via de novo pathway; (S)-dihydroorotate from bicarbonate: step 2/3. Catalyzes the condensation of carbamoyl phosphate and aspartate to form carbamoyl aspartate and inorganic phosphate, the committed step in the de novo pyrimidine nucleotide biosynthesis pathway. The polypeptide is Aspartate carbamoyltransferase catalytic subunit (Prochlorococcus marinus (strain MIT 9303)).